Here is a 303-residue protein sequence, read N- to C-terminus: Sulfate adenylyltransferase subunit 2 (303 aa).

The protein belongs to the PAPS reductase family. CysD subfamily. Heterodimer composed of CysD, the smaller subunit, and CysN.

It catalyses the reaction sulfate + ATP + H(+) = adenosine 5'-phosphosulfate + diphosphate. It participates in sulfur metabolism; hydrogen sulfide biosynthesis; sulfite from sulfate: step 1/3. Functionally, with CysN forms the ATP sulfurylase (ATPS) that catalyzes the adenylation of sulfate producing adenosine 5'-phosphosulfate (APS) and diphosphate, the first enzymatic step in sulfur assimilation pathway. APS synthesis involves the formation of a high-energy phosphoric-sulfuric acid anhydride bond driven by GTP hydrolysis by CysN coupled to ATP hydrolysis by CysD. The protein is Sulfate adenylyltransferase subunit 2 of Sulfurimonas denitrificans (strain ATCC 33889 / DSM 1251) (Thiomicrospira denitrificans (strain ATCC 33889 / DSM 1251)).